The following is a 320-amino-acid chain: Lipoyl synthase (320 aa).

[4Fe-4S] cluster-binding residues include Cys67, Cys72, Cys78, Cys93, Cys97, Cys100, and Ser307. The Radical SAM core domain occupies 79–296 (FNHGTATFMI…GVIAKEIGFT (218 aa)).

Belongs to the radical SAM superfamily. Lipoyl synthase family. [4Fe-4S] cluster serves as cofactor.

It is found in the cytoplasm. The catalysed reaction is [[Fe-S] cluster scaffold protein carrying a second [4Fe-4S](2+) cluster] + N(6)-octanoyl-L-lysyl-[protein] + 2 oxidized [2Fe-2S]-[ferredoxin] + 2 S-adenosyl-L-methionine + 4 H(+) = [[Fe-S] cluster scaffold protein] + N(6)-[(R)-dihydrolipoyl]-L-lysyl-[protein] + 4 Fe(3+) + 2 hydrogen sulfide + 2 5'-deoxyadenosine + 2 L-methionine + 2 reduced [2Fe-2S]-[ferredoxin]. It functions in the pathway protein modification; protein lipoylation via endogenous pathway; protein N(6)-(lipoyl)lysine from octanoyl-[acyl-carrier-protein]: step 2/2. In terms of biological role, catalyzes the radical-mediated insertion of two sulfur atoms into the C-6 and C-8 positions of the octanoyl moiety bound to the lipoyl domains of lipoate-dependent enzymes, thereby converting the octanoylated domains into lipoylated derivatives. In Pseudoalteromonas atlantica (strain T6c / ATCC BAA-1087), this protein is Lipoyl synthase.